Consider the following 96-residue polypeptide: UPF0235 protein VIBHAR_03581 (96 aa).

It belongs to the UPF0235 family.

In Vibrio campbellii (strain ATCC BAA-1116), this protein is UPF0235 protein VIBHAR_03581.